The sequence spans 451 residues: MLDPILLRKDLQTVVDRLKSRGVDFDIARFNELESRRKAVQTETESQQARRNALAKQIGQLKGKGAPEAEVQAVMAESQALPARLKALEDELAQTQAQLNDLLMSVPNLPHASVPQGASSDENVEVRRWLPGAADERGIPAALGFEVRDHVAVGEPLGLDFDLAARLSGARFSFMRGQMARLHRALAQFMLDLQTGTHGYTECYTPYIVNSSTLFGTGQLPKFKDDMFFVTKGGGDDEPKVDEQGNPLAREDQYLISTSEITLTSVVRETIVAGADLPLRLTAHTPCFRSEAGSGGRDTRGMIRQHQFDKVEMVQIAHPEHSYEALEEMVGHAERVLQLLELPYRVMLLCTGDMGFGSAKTYDLEVWLPAQDTWREISSVSNCETFQARRMQARFRNAQNKPEYVHTLNGSGLAVGRALVAVLENCQQADGSVRVPAVLQPYMGGLTVLEP.

258 to 260 (TSE) is a binding site for L-serine. 289-291 (RSE) contributes to the ATP binding site. E312 contacts L-serine. Position 376 to 379 (376 to 379 (EISS)) interacts with ATP. S411 provides a ligand contact to L-serine.

The protein belongs to the class-II aminoacyl-tRNA synthetase family. Type-1 seryl-tRNA synthetase subfamily. In terms of assembly, homodimer. The tRNA molecule binds across the dimer.

It localises to the cytoplasm. It catalyses the reaction tRNA(Ser) + L-serine + ATP = L-seryl-tRNA(Ser) + AMP + diphosphate + H(+). The enzyme catalyses tRNA(Sec) + L-serine + ATP = L-seryl-tRNA(Sec) + AMP + diphosphate + H(+). It participates in aminoacyl-tRNA biosynthesis; selenocysteinyl-tRNA(Sec) biosynthesis; L-seryl-tRNA(Sec) from L-serine and tRNA(Sec): step 1/1. Its function is as follows. Catalyzes the attachment of serine to tRNA(Ser). Is also able to aminoacylate tRNA(Sec) with serine, to form the misacylated tRNA L-seryl-tRNA(Sec), which will be further converted into selenocysteinyl-tRNA(Sec). The protein is Serine--tRNA ligase of Bordetella pertussis (strain Tohama I / ATCC BAA-589 / NCTC 13251).